We begin with the raw amino-acid sequence, 246 residues long: Bis(5'-nucleosyl)-tetraphosphatase PrpE [asymmetrical] (246 aa).

It belongs to the PrpE family. It depends on Ni(2+) as a cofactor.

The catalysed reaction is P(1),P(4)-bis(5'-guanosyl) tetraphosphate + H2O = GMP + GTP + 2 H(+). Functionally, asymmetrically hydrolyzes Ap4p to yield AMP and ATP. In Bacillus cereus (strain Q1), this protein is Bis(5'-nucleosyl)-tetraphosphatase PrpE [asymmetrical].